The sequence spans 192 residues: NAD(P)H-quinone oxidoreductase subunit J, organellar chromatophore (192 aa).

It belongs to the complex I 30 kDa subunit family. NDH is composed of at least 16 different subunits, 5 of which are encoded in the nucleus.

It localises to the plastid. It is found in the organellar chromatophore thylakoid membrane. The enzyme catalyses a quinone + NADH + H(+) = a quinol + NAD(+). Functionally, NDH-1 shuttles electrons from NADH, via FMN and iron-sulfur (Fe-S) centers, to quinones in the respiratory chain. Couples the redox reaction to proton translocation (for every two electrons transferred, four hydrogen ions are translocated across the cytoplasmic membrane), and thus conserves the redox energy in a proton gradient. This chain is NAD(P)H-quinone oxidoreductase subunit J, organellar chromatophore, found in Paulinella chromatophora.